Reading from the N-terminus, the 303-residue chain is tRNA dimethylallyltransferase (303 aa).

Residue 12–19 (GTTASGKS) participates in ATP binding. 14–19 (TASGKS) serves as a coordination point for substrate. Residues 37 to 40 (DSRQ) are interaction with substrate tRNA.

Belongs to the IPP transferase family. Monomer. Requires Mg(2+) as cofactor.

It carries out the reaction adenosine(37) in tRNA + dimethylallyl diphosphate = N(6)-dimethylallyladenosine(37) in tRNA + diphosphate. Its function is as follows. Catalyzes the transfer of a dimethylallyl group onto the adenine at position 37 in tRNAs that read codons beginning with uridine, leading to the formation of N6-(dimethylallyl)adenosine (i(6)A). In Synechocystis sp. (strain ATCC 27184 / PCC 6803 / Kazusa), this protein is tRNA dimethylallyltransferase.